Consider the following 132-residue polypeptide: Phosphomevalonate dehydratase small subunit (132 aa).

Ser61 functions as the Proton acceptor in the catalytic mechanism.

Belongs to the AcnX type II small subunit family. In terms of assembly, heterodimer composed of a large subunit (PMDh-L) and a small subunit (PMDh-S).

It carries out the reaction (R)-5-phosphomevalonate = (2E)-3-methyl-5-phosphooxypent-2-enoate + H2O. The protein operates within isoprenoid biosynthesis; isopentenyl diphosphate biosynthesis via mevalonate pathway. Component of a hydro-lyase that catalyzes the dehydration of mevalonate 5-phosphate (MVA5P) to form trans-anhydromevalonate 5-phosphate (tAHMP). Involved in the archaeal mevalonate (MVA) pathway, which provides fundamental precursors for isoprenoid biosynthesis, such as isopentenyl diphosphate (IPP) and dimethylallyl diphosphate (DMAPP). This chain is Phosphomevalonate dehydratase small subunit, found in Archaeoglobus fulgidus (strain ATCC 49558 / DSM 4304 / JCM 9628 / NBRC 100126 / VC-16).